A 914-amino-acid chain; its full sequence is DNA mismatch repair protein MutS (914 aa).

The segment at 1–24 is disordered; the sequence is MDNKTDNKNNLTPQSAPSSAPHKE. The segment covering 8 to 18 has biased composition (polar residues); that stretch reads KNNLTPQSAPS. Position 662–669 (662–669) interacts with ATP; the sequence is GPNMGGKS.

The protein belongs to the DNA mismatch repair MutS family.

Its function is as follows. This protein is involved in the repair of mismatches in DNA. It is possible that it carries out the mismatch recognition step. This protein has a weak ATPase activity. The chain is DNA mismatch repair protein MutS from Bartonella henselae (strain ATCC 49882 / DSM 28221 / CCUG 30454 / Houston 1) (Rochalimaea henselae).